The following is a 383-amino-acid chain: Succinyl-diaminopimelate desuccinylase (383 aa).

H74 lines the Zn(2+) pocket. D76 is a catalytic residue. D107 is a binding site for Zn(2+). E141 (proton acceptor) is an active-site residue. Residues E142, E170, and H356 each coordinate Zn(2+).

This sequence belongs to the peptidase M20A family. DapE subfamily. Homodimer. It depends on Zn(2+) as a cofactor. Co(2+) serves as cofactor.

The enzyme catalyses N-succinyl-(2S,6S)-2,6-diaminopimelate + H2O = (2S,6S)-2,6-diaminopimelate + succinate. It functions in the pathway amino-acid biosynthesis; L-lysine biosynthesis via DAP pathway; LL-2,6-diaminopimelate from (S)-tetrahydrodipicolinate (succinylase route): step 3/3. Functionally, catalyzes the hydrolysis of N-succinyl-L,L-diaminopimelic acid (SDAP), forming succinate and LL-2,6-diaminopimelate (DAP), an intermediate involved in the bacterial biosynthesis of lysine and meso-diaminopimelic acid, an essential component of bacterial cell walls. The sequence is that of Succinyl-diaminopimelate desuccinylase from Cupriavidus necator (strain ATCC 17699 / DSM 428 / KCTC 22496 / NCIMB 10442 / H16 / Stanier 337) (Ralstonia eutropha).